A 123-amino-acid chain; its full sequence is Large ribosomal subunit protein bL12 (123 aa).

Belongs to the bacterial ribosomal protein bL12 family. Homodimer. Part of the ribosomal stalk of the 50S ribosomal subunit. Forms a multimeric L10(L12)X complex, where L10 forms an elongated spine to which 2 to 4 L12 dimers bind in a sequential fashion. Binds GTP-bound translation factors.

In terms of biological role, forms part of the ribosomal stalk which helps the ribosome interact with GTP-bound translation factors. Is thus essential for accurate translation. The protein is Large ribosomal subunit protein bL12 of Clostridium botulinum (strain ATCC 19397 / Type A).